A 104-amino-acid polypeptide reads, in one-letter code: Iron-sulfur cluster assembly protein CyaY (104 aa).

Belongs to the frataxin family.

Its function is as follows. Involved in iron-sulfur (Fe-S) cluster assembly. May act as a regulator of Fe-S biogenesis. In Vibrio vulnificus (strain CMCP6), this protein is Iron-sulfur cluster assembly protein CyaY.